Consider the following 279-residue polypeptide: Large ribosomal subunit protein uL5c (279 aa).

Disordered stretches follow at residues 1–23 and 40–63; these read MAATAVTLPSSPAPFPVTTTASS and LRVAASAAADAPPKPAPPPTSPSG. Residues 1-43 constitute a chloroplast transit peptide; it reads MAATAVTLPSSPAPFPVTTTASSSRNVRLLLRSPPPRRALRVA. Residues 41 to 50 show a composition bias toward low complexity; sequence RVAASAAADA. The segment covering 51 to 60 has biased composition (pro residues); that stretch reads PPKPAPPPTS.

The protein belongs to the universal ribosomal protein uL5 family. As to quaternary structure, part of the 50S ribosomal subunit; contacts the 5S rRNA.

The protein localises to the plastid. It localises to the chloroplast. In terms of biological role, binds 5S rRNA, forms part of the central protuberance of the 50S subunit. This Oryza sativa subsp. japonica (Rice) protein is Large ribosomal subunit protein uL5c (RPL5).